The following is a 221-amino-acid chain: GTPase Obg (221 aa).

An OBG-type G domain is found at 1 to 61 (PSALRLVLLN…LKYKLLEIVQ (61 aa)). GTP contacts are provided by residues 10–13 (NKAD) and 42–44 (SAV). An OCT domain is found at 82–162 (VVHRTKGQFQ…IGGISFEWEP (81 aa)).

Belongs to the TRAFAC class OBG-HflX-like GTPase superfamily. OBG GTPase family. Monomer. Mg(2+) is required as a cofactor.

It is found in the cytoplasm. Functionally, an essential GTPase which binds GTP, GDP and possibly (p)ppGpp with moderate affinity, with high nucleotide exchange rates and a fairly low GTP hydrolysis rate. Plays a role in control of the cell cycle, stress response, ribosome biogenesis and in those bacteria that undergo differentiation, in morphogenesis control. The polypeptide is GTPase Obg (Corynebacterium melassecola).